A 1207-amino-acid chain; its full sequence is Dermatan-sulfate epimerase-like protein (1207 aa).

Positions 1-22 (MAFMFTEHLLFLTLMMCSFSTC) are cleaved as a signal peptide. Residues Asn28, Asn661, Asn683, and Asn704 are each glycosylated (N-linked (GlcNAc...) asparagine). Transmembrane regions (helical) follow at residues 761–781 (FPFG…SLVI) and 798–818 (CVLI…WSTC). A glycan (N-linked (GlcNAc...) asparagine) is linked at Asn869.

It belongs to the dermatan-sulfate isomerase family.

It is found in the membrane. This is Dermatan-sulfate epimerase-like protein (Dsel) from Mus musculus (Mouse).